The primary structure comprises 396 residues: Elongation factor Tu 1 (396 aa).

Residues 10–206 (KPHVNVGTIG…QIDSYIPEPE (197 aa)) form the tr-type G domain. The segment at 19-26 (GHIDHGKT) is G1. 19-26 (GHIDHGKT) is a binding site for GTP. Thr-26 lines the Mg(2+) pocket. A G2 region spans residues 60 to 64 (GITIA). The segment at 81–84 (DCPG) is G3. GTP is bound by residues 81-85 (DCPGH) and 136-139 (NKCD). The segment at 136-139 (NKCD) is G4. Residues 174-176 (SAL) form a G5 region.

Belongs to the TRAFAC class translation factor GTPase superfamily. Classic translation factor GTPase family. EF-Tu/EF-1A subfamily. In terms of assembly, monomer.

It localises to the cytoplasm. It carries out the reaction GTP + H2O = GDP + phosphate + H(+). Functionally, GTP hydrolase that promotes the GTP-dependent binding of aminoacyl-tRNA to the A-site of ribosomes during protein biosynthesis. This Desulfotalea psychrophila (strain LSv54 / DSM 12343) protein is Elongation factor Tu 1.